Reading from the N-terminus, the 340-residue chain is Probable ribonucleoside hydrolase (340 aa).

Aspartate 14 is a Ca(2+) binding site. Residue aspartate 18 participates in substrate binding. The Ca(2+) site is built by aspartate 19 and threonine 139. 3 residues coordinate substrate: asparagine 172, glutamate 178, and asparagine 180. Residue histidine 259 is the Proton donor of the active site. Residue aspartate 260 participates in Ca(2+) binding.

This sequence belongs to the IUNH family. It depends on Ca(2+) as a cofactor.

The enzyme catalyses a purine D-ribonucleoside + H2O = a purine nucleobase + D-ribose. It catalyses the reaction a pyrimidine ribonucleoside + H2O = a pyrimidine nucleobase + D-ribose. It participates in purine metabolism; purine nucleoside salvage. Functionally, catalyzes the hydrolysis of the N-glycosidic bond of purine and/or pyrimidine nucleosides into ribose and the base. This Dictyostelium discoideum (Social amoeba) protein is Probable ribonucleoside hydrolase (iunH).